Consider the following 103-residue polypeptide: Large ribosomal subunit protein eL30 (103 aa).

The protein belongs to the eukaryotic ribosomal protein eL30 family.

The sequence is that of Large ribosomal subunit protein eL30 from Methanosarcina mazei (strain ATCC BAA-159 / DSM 3647 / Goe1 / Go1 / JCM 11833 / OCM 88) (Methanosarcina frisia).